The sequence spans 466 residues: Methylenetetrahydrofolate--tRNA-(uracil-5-)-methyltransferase TrmFO (466 aa).

14 to 19 (GGGLAG) lines the FAD pocket.

It belongs to the MnmG family. TrmFO subfamily. The cofactor is FAD.

The protein resides in the cytoplasm. It catalyses the reaction uridine(54) in tRNA + (6R)-5,10-methylene-5,6,7,8-tetrahydrofolate + NADH + H(+) = 5-methyluridine(54) in tRNA + (6S)-5,6,7,8-tetrahydrofolate + NAD(+). The enzyme catalyses uridine(54) in tRNA + (6R)-5,10-methylene-5,6,7,8-tetrahydrofolate + NADPH + H(+) = 5-methyluridine(54) in tRNA + (6S)-5,6,7,8-tetrahydrofolate + NADP(+). In terms of biological role, catalyzes the folate-dependent formation of 5-methyl-uridine at position 54 (M-5-U54) in all tRNAs. This Brucella melitensis biotype 1 (strain ATCC 23456 / CCUG 17765 / NCTC 10094 / 16M) protein is Methylenetetrahydrofolate--tRNA-(uracil-5-)-methyltransferase TrmFO.